An 831-amino-acid polypeptide reads, in one-letter code: uncharacterized protein (831 aa).

The CID domain maps to 1 to 146 (MDIFDSTITS…RAFSILSGVA (146 aa)). Disordered regions lie at residues 205-233 (SSSS…SSIS), 265-354 (KEHF…NYNN), 434-480 (IGNS…NEDS), and 572-831 (CGAD…SNRH). Low complexity-rich tracts occupy residues 272 to 354 (NDTS…NYNN) and 434 to 477 (IGNS…NNNN). Basic and acidic residues-rich tracts occupy residues 592–601 (NENKQNDSHR) and 611–813 (SRGE…RSKE). The segment covering 817-831 (NNDNRSSSNRSSNRH) has biased composition (low complexity).

This is an uncharacterized protein from Dictyostelium discoideum (Social amoeba).